A 609-amino-acid chain; its full sequence is MADSERSEAFGTPDDTPLSSNDAAELEQLRREAAVLREQLESAVGPQGTARSARDVHQLEARIDSLAARNSKLMETLKEARQQLLALREEVDRLGQPPSGYGVLLSTHDDDTVDVFTSGRKMRLTCSPNIEISLLRKGQTVRLNEALTVVEAGTFESVGEISTLREVLADGHRALVVGHADEERIVWLAEPLVAEDLPDGFPDALNDDTKPRKLRPGDSLLVDTKAGYAFERIPKAEVEDLVLEEVPDVSYEDIGGLTRQIEQIRDAVELPFLHKELYREYALRPPKGVLLYGPPGCGKTLIAKAVANSLAKKMAEVRGDDSREAKSYFLNIKGPELLNKFVGETERHIRLIFQRAREKASEGTPVIVFFDEMDSIFRTRGTGVSSDVETTVVPQLLSEIDGVEGLENVIVIGASNREDMIDPAILRPGRLDVKIKIERPDAEAAQDIYSKYLTETLPVHADDLAEFEGERPACIKAMIEKVVDRMYAEIDDNRFLEVTYANGDKEVMYFKDFNSGAMIQNVVDRAKKNAIKSVLETGQPGLRIQHLLDSIVDEFAENEDLPNTTNPDDWARISGKKGERIVYIRTLVTGKSSSASRAIDTESNLGQYL.

The interval 1–25 is disordered; that stretch reads MADSERSEAFGTPDDTPLSSNDAAE. Residues 19-96 adopt a coiled-coil conformation; that stretch reads SSNDAAELEQ…LREEVDRLGQ (78 aa). Residue 296–301 participates in ATP binding; it reads GCGKTL. A docks into pockets in the proteasome alpha-ring region spans residues 608-609; sequence YL.

The protein belongs to the AAA ATPase family. As to quaternary structure, homohexamer. Assembles into a hexameric ring structure that caps the 20S proteasome core. Strongly interacts with the prokaryotic ubiquitin-like protein Pup through a hydrophobic interface; the interacting region of ARC lies in its N-terminal coiled-coil domain. There is one Pup binding site per ARC hexamer ring. Upon ATP-binding, the C-terminus of ARC interacts with the alpha-rings of the proteasome core, possibly by binding to the intersubunit pockets.

It participates in protein degradation; proteasomal Pup-dependent pathway. In terms of biological role, ATPase which is responsible for recognizing, binding, unfolding and translocation of pupylated proteins into the bacterial 20S proteasome core particle. May be essential for opening the gate of the 20S proteasome via an interaction with its C-terminus, thereby allowing substrate entry and access to the site of proteolysis. Thus, the C-termini of the proteasomal ATPase may function like a 'key in a lock' to induce gate opening and therefore regulate proteolysis. In Mycobacterium marinum (strain ATCC BAA-535 / M), this protein is Proteasome-associated ATPase.